We begin with the raw amino-acid sequence, 136 residues long: ATP synthase epsilon chain (136 aa).

Belongs to the ATPase epsilon chain family. As to quaternary structure, F-type ATPases have 2 components, CF(1) - the catalytic core - and CF(0) - the membrane proton channel. CF(1) has five subunits: alpha(3), beta(3), gamma(1), delta(1), epsilon(1). CF(0) has three main subunits: a, b and c.

It is found in the cell membrane. Produces ATP from ADP in the presence of a proton gradient across the membrane. This chain is ATP synthase epsilon chain, found in Exiguobacterium sp. (strain ATCC BAA-1283 / AT1b).